Consider the following 292-residue polypeptide: Ribosomal RNA small subunit methyltransferase A (292 aa).

S-adenosyl-L-methionine contacts are provided by N28, L30, G55, E76, D101, and N126.

This sequence belongs to the class I-like SAM-binding methyltransferase superfamily. rRNA adenine N(6)-methyltransferase family. RsmA subfamily.

The protein localises to the cytoplasm. The enzyme catalyses adenosine(1518)/adenosine(1519) in 16S rRNA + 4 S-adenosyl-L-methionine = N(6)-dimethyladenosine(1518)/N(6)-dimethyladenosine(1519) in 16S rRNA + 4 S-adenosyl-L-homocysteine + 4 H(+). Functionally, specifically dimethylates two adjacent adenosines (A1518 and A1519) in the loop of a conserved hairpin near the 3'-end of 16S rRNA in the 30S particle. May play a critical role in biogenesis of 30S subunits. The sequence is that of Ribosomal RNA small subunit methyltransferase A from Bacillus anthracis.